Here is a 1020-residue protein sequence, read N- to C-terminus: Protein translocase subunit SecA (1020 aa).

ATP is bound by residues Gln-143, 161–165 (GEGKT), and Asp-661. The segment at 974–1020 (SVYNASPGAENEAPLQRPVTADSKPGRNDPCPCGSGKKYKNCHGQQP) is disordered. Zn(2+) is bound by residues Cys-1004, Cys-1006, Cys-1015, and His-1016.

It belongs to the SecA family. In terms of assembly, monomer and homodimer. Part of the essential Sec protein translocation apparatus which comprises SecA, SecYEG and auxiliary proteins SecDF. Other proteins may also be involved. Requires Zn(2+) as cofactor.

It localises to the cell inner membrane. The protein resides in the cytoplasm. The catalysed reaction is ATP + H2O + cellular proteinSide 1 = ADP + phosphate + cellular proteinSide 2.. Functionally, part of the Sec protein translocase complex. Interacts with the SecYEG preprotein conducting channel. Has a central role in coupling the hydrolysis of ATP to the transfer of proteins into and across the cell membrane, serving as an ATP-driven molecular motor driving the stepwise translocation of polypeptide chains across the membrane. The polypeptide is Protein translocase subunit SecA (Chlorobium phaeovibrioides (strain DSM 265 / 1930) (Prosthecochloris vibrioformis (strain DSM 265))).